Here is a 66-residue protein sequence, read N- to C-terminus: Large ribosomal subunit protein uL29 (66 aa).

The protein belongs to the universal ribosomal protein uL29 family.

The sequence is that of Large ribosomal subunit protein uL29 from Rhizobium johnstonii (strain DSM 114642 / LMG 32736 / 3841) (Rhizobium leguminosarum bv. viciae).